A 230-amino-acid polypeptide reads, in one-letter code: Probable septum site-determining protein MinC (230 aa).

It belongs to the MinC family. Interacts with MinD and FtsZ.

Its function is as follows. Cell division inhibitor that blocks the formation of polar Z ring septums. Rapidly oscillates between the poles of the cell to destabilize FtsZ filaments that have formed before they mature into polar Z rings. Prevents FtsZ polymerization. The sequence is that of Probable septum site-determining protein MinC from Cronobacter sakazakii (strain ATCC BAA-894) (Enterobacter sakazakii).